A 356-amino-acid polypeptide reads, in one-letter code: Probable G-protein coupled receptor 32 (356 aa).

The Extracellular segment spans residues methionine 1–proline 44. N-linked (GlcNAc...) asparagine glycosylation occurs at asparagine 30. A helical transmembrane segment spans residues leucine 45–methionine 67. The Cytoplasmic portion of the chain corresponds to threonine 68–threonine 78. Residues valine 79–tyrosine 100 traverse the membrane as a helical segment. Residues tyrosine 101–leucine 116 lie on the Extracellular side of the membrane. An intrachain disulfide couples cysteine 114 to cysteine 191. Residues tyrosine 117–valine 137 traverse the membrane as a helical segment. At aspartate 138–glutamine 156 the chain is on the cytoplasmic side. The chain crosses the membrane as a helical span at residues arginine 157–lysine 178. Residues phenylalanine 179–histidine 220 lie on the Extracellular side of the membrane. The N-linked (GlcNAc...) asparagine glycan is linked to asparagine 199. The helical transmembrane segment at phenylalanine 221–alanine 241 threads the bilayer. The Cytoplasmic portion of the chain corresponds to lysine 242–leucine 257. A helical membrane pass occupies residues leucine 258–leucine 280. Topologically, residues tryptophan 281–alanine 300 are extracellular. A helical transmembrane segment spans residues serine 301–glycine 320. At arginine 321–glutamate 356 the chain is on the cytoplasmic side.

It belongs to the G-protein coupled receptor 1 family. Expressed in resting primary human macrophages.

It is found in the cell membrane. In terms of biological role, G-protein coupled receptor that binds to several ligands including resolvin D1 (RvD1) with high affinity, leading to rapid and transient activation of numerous intracellular signaling pathways. In macrophages, enhances the RvD1-stimulated phagocytic and clearance functions. Macrophages migrate less toward different chemoattractant stimuli but phagocytose more microbial particles. Prevents the increase in Ca(2+) and activation of ERK1/2 used by histamine and its H1 receptor subtype to induce goblet cell secretion by activating PKC and GRK2 to counter-regulate the histamine receptor. The protein is Probable G-protein coupled receptor 32 (GPR32) of Homo sapiens (Human).